The chain runs to 617 residues: ATP-dependent RNA helicase DBP1 (617 aa).

Residues 1–90 are disordered; it reads MADLPQKVSN…TSANYNRGGS (90 aa). A compositionally biased stretch (polar residues) spans 7–17; sequence KVSNLSINNKE. Residues 38-58 are compositionally biased toward basic and acidic residues; the sequence is PSFERSTPKQEDKVTGGDFFR. Residues 79 to 90 are compositionally biased toward polar residues; the sequence is GGTSANYNRGGS. The Q motif signature appears at 154–182; it reads LDFSSPPLDELLMENIKLASFTKPTPVQK. Positions 185–374 constitute a Helicase ATP-binding domain; sequence IPIVTKGRDL…RDFLDNYIFL (190 aa). 198–205 is an ATP binding site; the sequence is AQTGSGKT. The DEAD box motif lies at 318–321; sequence DEAD. A Helicase C-terminal domain is found at 385–545; that stretch reads NITQRILYVD…EVPTFLSDLS (161 aa). A disordered region spans residues 542–617; it reads SDLSRQNSRG…GYGNSNASWW (76 aa). Polar residues predominate over residues 580-594; the sequence is FGSTRPRNTGTSNWG.

It belongs to the DEAD box helicase family. DDX3/DED1 subfamily.

It localises to the cytoplasm. It catalyses the reaction ATP + H2O = ADP + phosphate + H(+). ATP-binding RNA helicase involved in translation initiation. Remodels RNA in response to ADP and ATP concentrations by facilitating disruption, but also formation of RNA duplexes. Redundant to DED1, may be required in conditions in which DED1 expression is decreased. The polypeptide is ATP-dependent RNA helicase DBP1 (DBP1) (Saccharomyces cerevisiae (strain ATCC 204508 / S288c) (Baker's yeast)).